Reading from the N-terminus, the 544-residue chain is NEDD4-binding protein 3 (544 aa).

4 disordered regions span residues 61–84 (LPKKDSKSTKNTKRAPRNEPADYA), 116–252 (SVFK…EFSC), 335–365 (KELRAQQGLAPEPRAPGTLPEADPSARPEEE), and 430–465 (QEQAPREEAPGSCETDDCKSRGLLGEAGGSEARDSA). Serine 176 is modified (phosphoserine). Low complexity predominate over residues 186–222 (PSLSDSSSGGSFGRSPGTGPSPFSSSLGHLNHLGGSL). The stretch at 294-530 (LAELKRLYVE…LEQELRALRE (237 aa)) forms a coiled coil.

This sequence belongs to the N4BP3 family. Binds NEDD4. Interacts with 14-3-3 proteins. Interacts with MAVS.

It localises to the cytoplasmic vesicle. Its subcellular location is the cell projection. The protein resides in the axon. The protein localises to the dendrite. Its function is as follows. Plays a positive role in the antiviral innate immune signaling pathway. Mechanistically, interacts with MAVS and functions as a positive regulator to promote 'Lys-63'-linked polyubiquitination of MAVS and thus strengthens the interaction between MAVS and TRAF2. Also plays a role in axon and dendrite arborization during cranial nerve development. May also be important for neural crest migration and early development of other anterior structures including eye, brain and cranial cartilage. The sequence is that of NEDD4-binding protein 3 (N4BP3) from Homo sapiens (Human).